Here is a 658-residue protein sequence, read N- to C-terminus: Ubiquilin-3 (658 aa).

The 75-residue stretch at Ile-22–Arg-96 folds into the Ubiquitin-like domain. The region spanning Asn-194–Met-233 is the STI1 domain. The span at Thr-280–Ser-291 shows a compositional bias: low complexity. Disordered stretches follow at residues Thr-280–Leu-336 and Tyr-362–Pro-478. Positions Val-312–Gln-323 are enriched in gly residues. Composition is skewed to polar residues over residues Tyr-362–Ser-379, Ser-389–Pro-400, and Thr-438–Ser-469. The 45-residue stretch at Gln-614–Ser-658 folds into the UBA domain.

In terms of tissue distribution, testis-specific (at protein level).

The polypeptide is Ubiquilin-3 (Ubqln3) (Mus musculus (Mouse)).